A 432-amino-acid chain; its full sequence is Protein trichome birefringence-like 23 (432 aa).

A helical; Signal-anchor for type II membrane protein transmembrane segment spans residues 13 to 35 (QNTYLIKLVAATLITCLAFRFFV). The GDS motif motif lies at 153–155 (GDS). Residues 404-418 (DCLHWCLPGPIDHLN) carry the DCXHWCLPGXXDXWN motif motif.

This sequence belongs to the PC-esterase family. TBL subfamily.

Its subcellular location is the membrane. Its function is as follows. May act as a bridging protein that binds pectin and other cell wall polysaccharides. Probably involved in maintaining esterification of pectins. May be involved in the specific O-acetylation of cell wall polymers. The polypeptide is Protein trichome birefringence-like 23 (TBL23) (Arabidopsis thaliana (Mouse-ear cress)).